The primary structure comprises 446 residues: N-succinylarginine dihydrolase (446 aa).

Substrate contacts are provided by residues 19–28 (AGLSFGNVAS), Asn110, and 137–138 (HR). Glu174 is a catalytic residue. Arg213 contributes to the substrate binding site. His249 is a catalytic residue. Residues Asp251 and Asn364 each coordinate substrate. The Nucleophile role is filled by Cys370.

This sequence belongs to the succinylarginine dihydrolase family. Homodimer.

The enzyme catalyses N(2)-succinyl-L-arginine + 2 H2O + 2 H(+) = N(2)-succinyl-L-ornithine + 2 NH4(+) + CO2. It functions in the pathway amino-acid degradation; L-arginine degradation via AST pathway; L-glutamate and succinate from L-arginine: step 2/5. In terms of biological role, catalyzes the hydrolysis of N(2)-succinylarginine into N(2)-succinylornithine, ammonia and CO(2). This chain is N-succinylarginine dihydrolase, found in Burkholderia pseudomallei (strain 668).